We begin with the raw amino-acid sequence, 323 residues long: Serine/threonine-protein phosphatase PP1-gamma catalytic subunit (323 aa).

D64, H66, D92, and N124 together coordinate Mn(2+). The active-site Proton donor is the H125. Positions 173 and 248 each coordinate Mn(2+). A disordered region spans residues 300–323 (EKKKPNASRPVTPPRGMITKQAKK).

Belongs to the PPP phosphatase family. PP-1 subfamily. PP1 comprises a catalytic subunit, ppp1c1, ppp1cb or ppp1cc, which is folded into its native form by inhibitor 2 and glycogen synthetase kinase 3, and then is complexed to one or several targeting or regulatory subunits. The cofactor is Mn(2+).

It localises to the cytoplasm. Its subcellular location is the nucleus. The protein localises to the cleavage furrow. It is found in the nucleolus. The protein resides in the nucleoplasm. It localises to the chromosome. Its subcellular location is the centromere. The protein localises to the kinetochore. It is found in the nucleus speckle. The protein resides in the midbody. It localises to the mitochondrion. Its subcellular location is the cytoskeleton. The protein localises to the microtubule organizing center. It catalyses the reaction O-phospho-L-seryl-[protein] + H2O = L-seryl-[protein] + phosphate. The catalysed reaction is O-phospho-L-threonyl-[protein] + H2O = L-threonyl-[protein] + phosphate. Protein phosphatase 1 (PP1) is essential for cell division, and participates in the regulation of glycogen metabolism, muscle contractility and protein synthesis. Promotes nuclear envelope reassembly by targeting nuclear membrane vesicles to chromatin at the end of mitosis. Acts by dephosphorylating membrane proteins such as lamin B receptor (lbr) to regulate the binding of membrane proteins to chromatin. This chain is Serine/threonine-protein phosphatase PP1-gamma catalytic subunit, found in Xenopus tropicalis (Western clawed frog).